A 512-amino-acid polypeptide reads, in one-letter code: MKLKPIEVAEILQKEIANINCLSELEEVGQVITVGDGIAKIYGLANVKSGEVVEFKSGVKGLVLNLENDSVSAVIMGDDNQVQQGDNVKRIKEVLAVPVGKALLGRVVDVFGNPIDGKGDIASKEYRNIEVKAPGIIERASVSEPVQTGIKAIDSLIPIGRGQRELIIGDRQTGKTAIAVDTIINQKQAHLLTNEHDKIYCIYVAIGQKRSSVAQIVRKLEAAGAMGYTIVIAATASEAAALQFIAPYSACSMGEYFRDNGMHALIIYDDLSKHAVAYRQISLLLRRPPGREAYPGDIFFLHSRLLERAAKMSDAKGSGSLTALPIIETQAGDVSAYIPTNVISITDGQIFLESELFYKGIRPAVNVGISVSRVGSAAQIKAMKQVAGSVKLELAQFRELESFSQFESDLDPTTKAQIDHGKRLVEILKQAQYHPFPVEEQIVSIYVGTKKYLHDVPLQKVKEFEDKMLTEIRLNKNDILESIKNEKRITEETEQKLKTFLENFVKAFIKAS.

ATP is bound at residue 169 to 176 (GDRQTGKT).

This sequence belongs to the ATPase alpha/beta chains family. F-type ATPases have 2 components, CF(1) - the catalytic core - and CF(0) - the membrane proton channel. CF(1) has five subunits: alpha(3), beta(3), gamma(1), delta(1), epsilon(1). CF(0) has three main subunits: a(1), b(2) and c(9-12). The alpha and beta chains form an alternating ring which encloses part of the gamma chain. CF(1) is attached to CF(0) by a central stalk formed by the gamma and epsilon chains, while a peripheral stalk is formed by the delta and b chains.

It is found in the cell inner membrane. It catalyses the reaction ATP + H2O + 4 H(+)(in) = ADP + phosphate + 5 H(+)(out). In terms of biological role, produces ATP from ADP in the presence of a proton gradient across the membrane. The alpha chain is a regulatory subunit. The chain is ATP synthase subunit alpha from Rickettsia canadensis (strain McKiel).